The sequence spans 118 residues: DNA-directed RNA polymerase subunit omega (118 aa).

Residues 78–104 (DEPEEDSMAMLMGGGQPDKPAEDDMSE) are disordered.

The protein belongs to the RNA polymerase subunit omega family. As to quaternary structure, the RNAP catalytic core consists of 2 alpha, 1 beta, 1 beta' and 1 omega subunit. When a sigma factor is associated with the core the holoenzyme is formed, which can initiate transcription.

The catalysed reaction is RNA(n) + a ribonucleoside 5'-triphosphate = RNA(n+1) + diphosphate. Promotes RNA polymerase assembly. Latches the N- and C-terminal regions of the beta' subunit thereby facilitating its interaction with the beta and alpha subunits. This chain is DNA-directed RNA polymerase subunit omega, found in Dinoroseobacter shibae (strain DSM 16493 / NCIMB 14021 / DFL 12).